Here is a 215-residue protein sequence, read N- to C-terminus: 3-demethoxyubiquinol 3-hydroxylase (215 aa).

Fe cation contacts are provided by E64, E94, H97, E146, E178, and H181.

This sequence belongs to the COQ7 family. It depends on Fe cation as a cofactor.

It localises to the cell membrane. The enzyme catalyses a 5-methoxy-2-methyl-3-(all-trans-polyprenyl)benzene-1,4-diol + AH2 + O2 = a 3-demethylubiquinol + A + H2O. It functions in the pathway cofactor biosynthesis; ubiquinone biosynthesis. Functionally, catalyzes the hydroxylation of 2-nonaprenyl-3-methyl-6-methoxy-1,4-benzoquinol during ubiquinone biosynthesis. The polypeptide is 3-demethoxyubiquinol 3-hydroxylase (Stutzerimonas stutzeri (strain A1501) (Pseudomonas stutzeri)).